The chain runs to 398 residues: G2/mitotic-specific cyclin-B2 (398 aa).

Residue Thr-8 is modified to Phosphothreonine. Phosphoserine occurs at positions 11, 77, and 92. Thr-94 carries the phosphothreonine modification. Phosphoserine occurs at positions 99, 392, and 398.

This sequence belongs to the cyclin family. Cyclin AB subfamily. As to quaternary structure, interacts with the CDK1 protein kinase to form a serine/threonine kinase holoenzyme complex also known as maturation promoting factor (MPF). The cyclin subunit imparts substrate specificity to the complex.

Its function is as follows. Essential for the control of the cell cycle at the G2/M (mitosis) transition. The protein is G2/mitotic-specific cyclin-B2 (CCNB2) of Macaca fascicularis (Crab-eating macaque).